The sequence spans 146 residues: Small ribosomal subunit protein uS5 (146 aa).

The region spanning 8–71 (FKEVVVNIGR…DDAFKNIIKV (64 aa)) is the S5 DRBM domain.

Belongs to the universal ribosomal protein uS5 family. As to quaternary structure, part of the 30S ribosomal subunit. Contacts proteins S4 and S8.

Functionally, with S4 and S12 plays an important role in translational accuracy. Located at the back of the 30S subunit body where it stabilizes the conformation of the head with respect to the body. The polypeptide is Small ribosomal subunit protein uS5 (Wolinella succinogenes (strain ATCC 29543 / DSM 1740 / CCUG 13145 / JCM 31913 / LMG 7466 / NCTC 11488 / FDC 602W) (Vibrio succinogenes)).